The chain runs to 291 residues: Energy-coupling factor transporter ATP-binding protein EcfA2 (291 aa).

The ABC transporter domain maps to Ile-3–Gly-246. Gly-40 to Ser-47 contacts ATP.

This sequence belongs to the ABC transporter superfamily. Energy-coupling factor EcfA family. As to quaternary structure, forms a stable energy-coupling factor (ECF) transporter complex composed of 2 membrane-embedded substrate-binding proteins (S component), 2 ATP-binding proteins (A component) and 2 transmembrane proteins (T component).

The protein localises to the cell membrane. ATP-binding (A) component of a common energy-coupling factor (ECF) ABC-transporter complex. Unlike classic ABC transporters this ECF transporter provides the energy necessary to transport a number of different substrates. In Latilactobacillus sakei subsp. sakei (strain 23K) (Lactobacillus sakei subsp. sakei), this protein is Energy-coupling factor transporter ATP-binding protein EcfA2.